A 131-amino-acid chain; its full sequence is Phosphoribosyl-AMP cyclohydrolase (131 aa).

Position 78 (Asp-78) interacts with Mg(2+). Position 79 (Cys-79) interacts with Zn(2+). The Mg(2+) site is built by Asp-80 and Asp-82. Residues Cys-96 and Cys-103 each coordinate Zn(2+).

It belongs to the PRA-CH family. As to quaternary structure, homodimer. Mg(2+) is required as a cofactor. Zn(2+) serves as cofactor.

The protein resides in the cytoplasm. The enzyme catalyses 1-(5-phospho-beta-D-ribosyl)-5'-AMP + H2O = 1-(5-phospho-beta-D-ribosyl)-5-[(5-phospho-beta-D-ribosylamino)methylideneamino]imidazole-4-carboxamide. It participates in amino-acid biosynthesis; L-histidine biosynthesis; L-histidine from 5-phospho-alpha-D-ribose 1-diphosphate: step 3/9. In terms of biological role, catalyzes the hydrolysis of the adenine ring of phosphoribosyl-AMP. This is Phosphoribosyl-AMP cyclohydrolase from Neisseria meningitidis serogroup A / serotype 4A (strain DSM 15465 / Z2491).